A 211-amino-acid chain; its full sequence is Thiamine-phosphate synthase (211 aa).

Residues 38 to 42 (QLREK) and Asn-70 each bind 4-amino-2-methyl-5-(diphosphooxymethyl)pyrimidine. Mg(2+) is bound by residues Asp-71 and Asp-90. Ser-109 contributes to the 4-amino-2-methyl-5-(diphosphooxymethyl)pyrimidine binding site. Residue 135–137 (TST) participates in 2-[(2R,5Z)-2-carboxy-4-methylthiazol-5(2H)-ylidene]ethyl phosphate binding. Lys-138 is a binding site for 4-amino-2-methyl-5-(diphosphooxymethyl)pyrimidine. Residues Gly-165 and 185–186 (IS) each bind 2-[(2R,5Z)-2-carboxy-4-methylthiazol-5(2H)-ylidene]ethyl phosphate.

It belongs to the thiamine-phosphate synthase family. It depends on Mg(2+) as a cofactor.

The catalysed reaction is 2-[(2R,5Z)-2-carboxy-4-methylthiazol-5(2H)-ylidene]ethyl phosphate + 4-amino-2-methyl-5-(diphosphooxymethyl)pyrimidine + 2 H(+) = thiamine phosphate + CO2 + diphosphate. It carries out the reaction 2-(2-carboxy-4-methylthiazol-5-yl)ethyl phosphate + 4-amino-2-methyl-5-(diphosphooxymethyl)pyrimidine + 2 H(+) = thiamine phosphate + CO2 + diphosphate. The enzyme catalyses 4-methyl-5-(2-phosphooxyethyl)-thiazole + 4-amino-2-methyl-5-(diphosphooxymethyl)pyrimidine + H(+) = thiamine phosphate + diphosphate. Its pathway is cofactor biosynthesis; thiamine diphosphate biosynthesis; thiamine phosphate from 4-amino-2-methyl-5-diphosphomethylpyrimidine and 4-methyl-5-(2-phosphoethyl)-thiazole: step 1/1. Condenses 4-methyl-5-(beta-hydroxyethyl)thiazole monophosphate (THZ-P) and 2-methyl-4-amino-5-hydroxymethyl pyrimidine pyrophosphate (HMP-PP) to form thiamine monophosphate (TMP). The sequence is that of Thiamine-phosphate synthase from Clostridium acetobutylicum (strain ATCC 824 / DSM 792 / JCM 1419 / IAM 19013 / LMG 5710 / NBRC 13948 / NRRL B-527 / VKM B-1787 / 2291 / W).